We begin with the raw amino-acid sequence, 130 residues long: NADH-quinone oxidoreductase subunit A (130 aa).

The next 3 helical transmembrane spans lie at 15 to 35 (AIHVALSAGIVAAIIVVATII), 67 to 87 (FLIAALFVIFDMEAAILFAWA), and 95 to 115 (WVGLIEAAIFIGVLLLALIYL).

This sequence belongs to the complex I subunit 3 family. NDH-1 is composed of 14 different subunits. Subunits NuoA, H, J, K, L, M, N constitute the membrane sector of the complex.

The protein localises to the cell inner membrane. The enzyme catalyses a quinone + NADH + 5 H(+)(in) = a quinol + NAD(+) + 4 H(+)(out). Its function is as follows. NDH-1 shuttles electrons from NADH, via FMN and iron-sulfur (Fe-S) centers, to quinones in the respiratory chain. The immediate electron acceptor for the enzyme in this species is believed to be ubiquinone. Couples the redox reaction to proton translocation (for every two electrons transferred, four hydrogen ions are translocated across the cytoplasmic membrane), and thus conserves the redox energy in a proton gradient. This Rhodopseudomonas palustris (strain BisA53) protein is NADH-quinone oxidoreductase subunit A.